Here is a 154-residue protein sequence, read N- to C-terminus: 3-hydroxyacyl-[acyl-carrier-protein] dehydratase FabZ (154 aa).

The active site involves His54.

It belongs to the thioester dehydratase family. FabZ subfamily.

The protein resides in the cytoplasm. It carries out the reaction a (3R)-hydroxyacyl-[ACP] = a (2E)-enoyl-[ACP] + H2O. Its function is as follows. Involved in unsaturated fatty acids biosynthesis. Catalyzes the dehydration of short chain beta-hydroxyacyl-ACPs and long chain saturated and unsaturated beta-hydroxyacyl-ACPs. The polypeptide is 3-hydroxyacyl-[acyl-carrier-protein] dehydratase FabZ (Shewanella putrefaciens (strain CN-32 / ATCC BAA-453)).